A 159-amino-acid chain; its full sequence is ATP synthase subunit b (159 aa).

The helical transmembrane segment at 4 to 24 threads the bilayer; it reads VGINGTLIVQLVTFVILVALL.

This sequence belongs to the ATPase B chain family. F-type ATPases have 2 components, F(1) - the catalytic core - and F(0) - the membrane proton channel. F(1) has five subunits: alpha(3), beta(3), gamma(1), delta(1), epsilon(1). F(0) has three main subunits: a(1), b(2) and c(10-14). The alpha and beta chains form an alternating ring which encloses part of the gamma chain. F(1) is attached to F(0) by a central stalk formed by the gamma and epsilon chains, while a peripheral stalk is formed by the delta and b chains.

It is found in the cell inner membrane. Functionally, f(1)F(0) ATP synthase produces ATP from ADP in the presence of a proton or sodium gradient. F-type ATPases consist of two structural domains, F(1) containing the extramembraneous catalytic core and F(0) containing the membrane proton channel, linked together by a central stalk and a peripheral stalk. During catalysis, ATP synthesis in the catalytic domain of F(1) is coupled via a rotary mechanism of the central stalk subunits to proton translocation. Component of the F(0) channel, it forms part of the peripheral stalk, linking F(1) to F(0). The polypeptide is ATP synthase subunit b (Acidithiobacillus ferridurans).